Reading from the N-terminus, the 881-residue chain is Alanine--tRNA ligase (881 aa).

The Zn(2+) site is built by His566, His570, Cys668, and His672.

It belongs to the class-II aminoacyl-tRNA synthetase family. It depends on Zn(2+) as a cofactor.

It localises to the cytoplasm. The catalysed reaction is tRNA(Ala) + L-alanine + ATP = L-alanyl-tRNA(Ala) + AMP + diphosphate. Its function is as follows. Catalyzes the attachment of alanine to tRNA(Ala) in a two-step reaction: alanine is first activated by ATP to form Ala-AMP and then transferred to the acceptor end of tRNA(Ala). Also edits incorrectly charged Ser-tRNA(Ala) and Gly-tRNA(Ala) via its editing domain. The protein is Alanine--tRNA ligase of Frankia alni (strain DSM 45986 / CECT 9034 / ACN14a).